A 1480-amino-acid polypeptide reads, in one-letter code: Cystic fibrosis transmembrane conductance regulator (1480 aa).

Residues 1–77 (MQRSPLEKAS…KLINALRRCF (77 aa)) lie on the Cytoplasmic side of the membrane. The helical transmembrane segment at 78–98 (FWRFMFYGILLYLGEVTKAVQ) threads the bilayer. The 285-residue stretch at 81-365 (FMFYGILLYL…WAVQTWYDSL (285 aa)) folds into the ABC transmembrane type-1 1 domain. Topologically, residues 99–122 (PLLLGRIIASYDPDNKTERSIAIY) are extracellular. Residues 123–146 (LGIGLCLLFIVRTLLLHPAIFGLH) traverse the membrane as a helical segment. Residues 147–195 (HIGMQMRIAMFSLIYKKTLKLSSRVLDKISIGQLVSLLSNNLNKFDEGL) are Cytoplasmic-facing. The chain crosses the membrane as a helical span at residues 196 to 216 (ALAHFVWIAPLQVALLMGLIW). Topologically, residues 217-222 (ELLQAS) are extracellular. The chain crosses the membrane as a helical span at residues 223 to 243 (AFCGLGFLIVLALFQAGLGRM). Residues 244–298 (MMKYRDQRAGKINERLVITSEMIENIQSVKAYCWEEAMEKMIENLRQTELKLTRK) are Cytoplasmic-facing. The chain crosses the membrane as a helical span at residues 299-319 (AAYVRYFNSSAFFFSGFFVVF). The Extracellular portion of the chain corresponds to 320–339 (LSVLPYALIKGIVLRKIFTT). Residues 340-358 (ISFCIVLRMAVTRQFPWAV) form a helical membrane-spanning segment. Over 359–858 (QTWYDSLGAI…YLRYITLHKS (500 aa)) the chain is Cytoplasmic. ATP-binding positions include tryptophan 401, serine 434, 458–465 (GSTGAGKT), and glutamine 493. The ABC transporter 1 domain maps to 423-646 (NGDDNLFFSN…RPDFSSKLMG (224 aa)). Residue cysteine 524 is the site of S-palmitoyl cysteine attachment. Residues serine 549 and serine 660 each carry the phosphoserine modification. Residues 654–831 (SSERRNSILT…EEINEEDLKE (178 aa)) are disordered R region. Serine 670 is modified (phosphoserine; by PKA). Serine 686 carries the phosphoserine modification. A Glycyl lysine isopeptide (Lys-Gly) (interchain with G-Cter in ubiquitin) cross-link involves residue lysine 688. A phosphoserine mark is found at serine 700 and serine 712. Threonine 717 is subject to Phosphothreonine. Phosphoserine occurs at positions 737, 753, 768, 790, 795, and 813. The chain crosses the membrane as a helical span at residues 859–879 (LIFVLIWCLVIFLAEVAASLV). Residues 859-1155 (LIFVLIWCLV…AVNSSIDVDS (297 aa)) form the ABC transmembrane type-1 2 domain. Residues 880-918 (VLWFLGNTPFQDKGNSTYSRNNSYAVIITNTSSYYVFYI) are Extracellular-facing. Residues asparagine 894, asparagine 900, and asparagine 909 are each glycosylated (N-linked (GlcNAc...) asparagine). Residues 919-939 (YVGVADTLLALGFFRGLPLVH) traverse the membrane as a discontinuously helical segment. The Cytoplasmic segment spans residues 940–990 (TLITVSKILHHKMLHSVLQAPMSTLNTLKAGGILNRFSKDIAILDDLLPLT). Residues 991–1011 (IFDFIQLLLIVIGAIAVVSVL) form a helical membrane-spanning segment. Topologically, residues 1012–1013 (QP) are extracellular. Residues 1014-1034 (YILLATVPVIAAFILLRAYFL) form a helical membrane-spanning segment. At 1035 to 1095 (QTSQQLKQLE…TANWFLYLAT (61 aa)) the chain is on the cytoplasmic side. The helical transmembrane segment at 1096–1116 (LRWFQMRIEIIFVIFFIAVTF) threads the bilayer. Topologically, residues 1117-1130 (ISILTTGEGEGTVG) are extracellular. The chain crosses the membrane as a helical span at residues 1131–1151 (IILTLAMNIMSTLQWAVNSSI). Residues 1152–1480 (DVDSLMRSVS…TEEEVQETRL (329 aa)) lie on the Cytoplasmic side of the membrane. In terms of domain architecture, ABC transporter 2 spans 1210-1443 (MTIKDLTAKY…KSLFQQAISH (234 aa)). Residues tyrosine 1219 and 1244 to 1251 (GRTGSGKS) each bind ATP. Positions 1386 to 1480 (RALKQAFADC…TEEEVQETRL (95 aa)) are interaction with GORASP2. Cysteine 1395 is lipidated: S-palmitoyl cysteine. Residues serine 1444 and serine 1456 each carry the phosphoserine modification. Residues 1452–1480 (HRNSSKYKSPPQIASLKEETEEEVQETRL) form a disordered region. Acidic residues predominate over residues 1470-1480 (ETEEEVQETRL). A PDZ-binding motif is present at residues 1478 to 1480 (TRL).

This sequence belongs to the ABC transporter superfamily. ABCC family. CFTR transporter (TC 3.A.1.202) subfamily. In terms of assembly, monomer; does not require oligomerization for channel activity. May form oligomers in the membrane. Interacts with SLC26A3, SLC26A6 and NHERF1. Interacts with SHANK2. Interacts with MYO6. Interacts (via C-terminus) with GOPC (via PDZ domain); this promotes CFTR internalization and thereby decreases channel activity. Interacts with SLC4A7 through NHERF1. Found in a complex with MYO5B and RAB11A. Interacts with ANO1. Interacts with SLC26A8. Interacts with AHCYL1; the interaction increases CFTR activity. Interacts with CSE1L. The core-glycosylated form interacts with GORASP2 (via PDZ GRASP-type 1 domain) in respone to ER stress. Interacts with MARCHF2; the interaction leads to CFTR ubiqtuitination and degradation. Interacts with ADGRG2. In terms of processing, N-glycosylated. Post-translationally, phosphorylated; cAMP treatment promotes phosphorylation and activates the channel. Dephosphorylation decreases the ATPase activity (in vitro). Phosphorylation at PKA sites activates the channel. Phosphorylation at PKC sites enhances the response to phosphorylation by PKA. Phosphorylated by AMPK; this inhibits channel activity. Ubiquitinated, leading to its degradation in the lysosome. Deubiquitination by USP10 in early endosomes enhances its endocytic recycling to the cell membrane. Ubiquitinated by RNF185 during ER stress. Ubiquitinated by MARCHF2.

Its subcellular location is the apical cell membrane. The protein localises to the early endosome membrane. It is found in the cell membrane. It localises to the recycling endosome membrane. The protein resides in the endoplasmic reticulum membrane. Its subcellular location is the nucleus. It carries out the reaction ATP + H2O + closed Cl(-) channel = ADP + phosphate + open Cl(-) channel.. It catalyses the reaction chloride(in) = chloride(out). The enzyme catalyses hydrogencarbonate(in) = hydrogencarbonate(out). The catalysed reaction is ATP + H2O = ADP + phosphate + H(+). Functionally, epithelial ion channel that plays an important role in the regulation of epithelial ion and water transport and fluid homeostasis. Mediates the transport of chloride ions across the cell membrane. Possesses an intrinsic ATPase activity and utilizes ATP to gate its channel; the passive flow of anions through the channel is gated by cycles of ATP binding and hydrolysis by the ATP-binding domains. The ion channel is also permeable to HCO(3)(-); selectivity depends on the extracellular chloride concentration. Exerts its function also by modulating the activity of other ion channels and transporters. Contributes to the regulation of the pH and the ion content of the epithelial fluid layer. Modulates the activity of the epithelial sodium channel (ENaC) complex, in part by regulating the cell surface expression of the ENaC complex. May regulate bicarbonate secretion and salvage in epithelial cells by regulating the transporter SLC4A7. Can inhibit the chloride channel activity of ANO1. Plays a role in the chloride and bicarbonate homeostasis during sperm epididymal maturation and capacitation. The chain is Cystic fibrosis transmembrane conductance regulator from Ateles geoffroyi (Black-handed spider monkey).